A 94-amino-acid polypeptide reads, in one-letter code: Cell division protein FtsB (94 aa).

Over 1–3 the chain is Cytoplasmic; the sequence is MRT. A helical transmembrane segment spans residues 4 to 21; sequence FAIFLLIALGWLQYTLWF. Residues 22–94 lie on the Periplasmic side of the membrane; that stretch reads GKNGMSDYAQ…YRIIDENSEG (73 aa). A coiled-coil region spans residues 33–71; the sequence is SNDVALQEEVNQGLRNRNEQMFAEIDDLKKGSEAIEERA.

It belongs to the FtsB family. As to quaternary structure, part of a complex composed of FtsB, FtsL and FtsQ.

The protein resides in the cell inner membrane. Essential cell division protein. May link together the upstream cell division proteins, which are predominantly cytoplasmic, with the downstream cell division proteins, which are predominantly periplasmic. In Aliivibrio fischeri (strain ATCC 700601 / ES114) (Vibrio fischeri), this protein is Cell division protein FtsB.